The sequence spans 302 residues: 4-hydroxy-tetrahydrodipicolinate synthase (302 aa).

A pyruvate-binding site is contributed by T46. Y135 (proton donor/acceptor) is an active-site residue. The Schiff-base intermediate with substrate role is filled by K164. Position 206 (V206) interacts with pyruvate.

This sequence belongs to the DapA family. In terms of assembly, homotetramer; dimer of dimers.

The protein localises to the cytoplasm. It catalyses the reaction L-aspartate 4-semialdehyde + pyruvate = (2S,4S)-4-hydroxy-2,3,4,5-tetrahydrodipicolinate + H2O + H(+). The protein operates within amino-acid biosynthesis; L-lysine biosynthesis via DAP pathway; (S)-tetrahydrodipicolinate from L-aspartate: step 3/4. Catalyzes the condensation of (S)-aspartate-beta-semialdehyde [(S)-ASA] and pyruvate to 4-hydroxy-tetrahydrodipicolinate (HTPA). In Acidobacterium capsulatum (strain ATCC 51196 / DSM 11244 / BCRC 80197 / JCM 7670 / NBRC 15755 / NCIMB 13165 / 161), this protein is 4-hydroxy-tetrahydrodipicolinate synthase.